The sequence spans 968 residues: RNA polymerase-associated protein RapA (968 aa).

Residues 163–332 (EVGRRYAPRV…FARLRLLDPD (170 aa)) enclose the Helicase ATP-binding domain. Residue 176–183 (DEVGLGKT) coordinates ATP. The short motif at 278-281 (DEAH) is the DEAH box element. Residues 491–655 (RVDWLIEFLK…EFAEDLLNVL (165 aa)) form the Helicase C-terminal domain.

This sequence belongs to the SNF2/RAD54 helicase family. RapA subfamily. Interacts with the RNAP. Has a higher affinity for the core RNAP than for the holoenzyme. Its ATPase activity is stimulated by binding to RNAP.

Functionally, transcription regulator that activates transcription by stimulating RNA polymerase (RNAP) recycling in case of stress conditions such as supercoiled DNA or high salt concentrations. Probably acts by releasing the RNAP, when it is trapped or immobilized on tightly supercoiled DNA. Does not activate transcription on linear DNA. Probably not involved in DNA repair. The chain is RNA polymerase-associated protein RapA from Shewanella baltica (strain OS223).